The sequence spans 339 residues: Phosphatidylglycerol--prolipoprotein diacylglyceryl transferase (339 aa).

3 helical membrane-spanning segments follow: residues phenylalanine 43–glycine 63, isoleucine 81–tryptophan 101, and asparagine 121–alanine 141. A 1,2-diacyl-sn-glycero-3-phospho-(1'-sn-glycerol) is bound at residue arginine 167. Helical transmembrane passes span phenylalanine 231–leucine 251 and leucine 300–tryptophan 320.

It belongs to the Lgt family.

Its subcellular location is the cell membrane. The catalysed reaction is L-cysteinyl-[prolipoprotein] + a 1,2-diacyl-sn-glycero-3-phospho-(1'-sn-glycerol) = an S-1,2-diacyl-sn-glyceryl-L-cysteinyl-[prolipoprotein] + sn-glycerol 1-phosphate + H(+). It participates in protein modification; lipoprotein biosynthesis (diacylglyceryl transfer). Catalyzes the transfer of the diacylglyceryl group from phosphatidylglycerol to the sulfhydryl group of the N-terminal cysteine of a prolipoprotein, the first step in the formation of mature lipoproteins. The polypeptide is Phosphatidylglycerol--prolipoprotein diacylglyceryl transferase (Deinococcus radiodurans (strain ATCC 13939 / DSM 20539 / JCM 16871 / CCUG 27074 / LMG 4051 / NBRC 15346 / NCIMB 9279 / VKM B-1422 / R1)).